Reading from the N-terminus, the 229-residue chain is Uracil-DNA glycosylase (229 aa).

The active-site Proton acceptor is Asp67.

The protein belongs to the uracil-DNA glycosylase (UDG) superfamily. UNG family.

Its subcellular location is the cytoplasm. The enzyme catalyses Hydrolyzes single-stranded DNA or mismatched double-stranded DNA and polynucleotides, releasing free uracil.. Functionally, excises uracil residues from the DNA which can arise as a result of misincorporation of dUMP residues by DNA polymerase or due to deamination of cytosine. This Coxiella burnetii (strain RSA 493 / Nine Mile phase I) protein is Uracil-DNA glycosylase.